Here is a 467-residue protein sequence, read N- to C-terminus: Uronate isomerase (467 aa).

This sequence belongs to the metallo-dependent hydrolases superfamily. Uronate isomerase family.

It catalyses the reaction D-glucuronate = D-fructuronate. The catalysed reaction is aldehydo-D-galacturonate = keto-D-tagaturonate. It participates in carbohydrate metabolism; pentose and glucuronate interconversion. The protein is Uronate isomerase of Actinobacillus succinogenes (strain ATCC 55618 / DSM 22257 / CCUG 43843 / 130Z).